Here is a 477-residue protein sequence, read N- to C-terminus: Xylose isomerase (477 aa).

Residue His142 is part of the active site. Glu273, Glu309, His312, Asp337, Asp348, Asp350, and Asp380 together coordinate Mn(2+).

Belongs to the xylose isomerase family. It depends on Mn(2+) as a cofactor.

The enzyme catalyses alpha-D-xylose = alpha-D-xylulofuranose. The chain is Xylose isomerase (XYLA) from Arabidopsis thaliana (Mouse-ear cress).